We begin with the raw amino-acid sequence, 282 residues long: Probable septum site-determining protein MinC (282 aa).

Residues 108-127 (AAARSADEESANAAAAAPAA) form a disordered region. Positions 118-127 (ANAAAAAPAA) are enriched in low complexity.

Belongs to the MinC family. In terms of assembly, interacts with MinD and FtsZ.

Functionally, cell division inhibitor that blocks the formation of polar Z ring septums. Rapidly oscillates between the poles of the cell to destabilize FtsZ filaments that have formed before they mature into polar Z rings. Prevents FtsZ polymerization. The chain is Probable septum site-determining protein MinC from Paraburkholderia xenovorans (strain LB400).